Here is a 275-residue protein sequence, read N- to C-terminus: Dermonecrotic toxin SpaSicTox-betaIIA2 (275 aa).

Residue histidine 5 is part of the active site. The Mg(2+) site is built by glutamate 25 and aspartate 27. Histidine 41 functions as the Nucleophile in the catalytic mechanism. Intrachain disulfides connect cysteine 45–cysteine 51 and cysteine 47–cysteine 190. Residue aspartate 85 coordinates Mg(2+).

The protein belongs to the arthropod phospholipase D family. Class II subfamily. Mg(2+) serves as cofactor. Expressed by the venom gland.

Its subcellular location is the secreted. The enzyme catalyses an N-(acyl)-sphingosylphosphocholine = an N-(acyl)-sphingosyl-1,3-cyclic phosphate + choline. The catalysed reaction is an N-(acyl)-sphingosylphosphoethanolamine = an N-(acyl)-sphingosyl-1,3-cyclic phosphate + ethanolamine. It carries out the reaction a 1-acyl-sn-glycero-3-phosphocholine = a 1-acyl-sn-glycero-2,3-cyclic phosphate + choline. It catalyses the reaction a 1-acyl-sn-glycero-3-phosphoethanolamine = a 1-acyl-sn-glycero-2,3-cyclic phosphate + ethanolamine. Functionally, dermonecrotic toxins cleave the phosphodiester linkage between the phosphate and headgroup of certain phospholipids (sphingolipid and lysolipid substrates), forming an alcohol (often choline) and a cyclic phosphate. This toxin acts on sphingomyelin (SM). It may also act on ceramide phosphoethanolamine (CPE), lysophosphatidylcholine (LPC) and lysophosphatidylethanolamine (LPE), but not on lysophosphatidylserine (LPS), and lysophosphatidylglycerol (LPG). It acts by transphosphatidylation, releasing exclusively cyclic phosphate products as second products. Induces dermonecrosis, hemolysis, increased vascular permeability, edema, inflammatory response, and platelet aggregation. The sequence is that of Dermonecrotic toxin SpaSicTox-betaIIA2 from Sicarius patagonicus (Six-eyed sand spider).